Consider the following 250-residue polypeptide: Flap endonuclease Xni (250 aa).

Asp-104 contacts Mg(2+). Positions 160–249 (VQPQQLTDFW…LQGNLQQLRL (90 aa)) constitute a 5'-3' exonuclease domain. Leu-171, Ala-172, Pro-180, Val-182, and Ile-185 together coordinate K(+). An interaction with DNA region spans residues 184–189 (GIGPKS).

This sequence belongs to the Xni family. Requires Mg(2+) as cofactor. The cofactor is K(+).

Has flap endonuclease activity. During DNA replication, flap endonucleases cleave the 5'-overhanging flap structure that is generated by displacement synthesis when DNA polymerase encounters the 5'-end of a downstream Okazaki fragment. This Sodalis glossinidius (strain morsitans) protein is Flap endonuclease Xni.